A 259-amino-acid polypeptide reads, in one-letter code: Phosphoadenosine 5'-phosphosulfate reductase (259 aa).

Catalysis depends on cysteine 244, which acts as the Nucleophile; cysteine thiosulfonate intermediate.

The protein belongs to the PAPS reductase family. CysH subfamily.

It is found in the cytoplasm. It catalyses the reaction [thioredoxin]-disulfide + sulfite + adenosine 3',5'-bisphosphate + 2 H(+) = [thioredoxin]-dithiol + 3'-phosphoadenylyl sulfate. It participates in sulfur metabolism; hydrogen sulfide biosynthesis; sulfite from sulfate: step 3/3. In terms of biological role, catalyzes the formation of sulfite from phosphoadenosine 5'-phosphosulfate (PAPS) using thioredoxin as an electron donor. This chain is Phosphoadenosine 5'-phosphosulfate reductase, found in Vibrio campbellii (strain ATCC BAA-1116).